Reading from the N-terminus, the 320-residue chain is o-succinylbenzoate synthase (320 aa).

Lys-133 (proton donor) is an active-site residue. Asp-161, Glu-190, and Asp-213 together coordinate Mg(2+). Residue Lys-235 is the Proton acceptor of the active site.

This sequence belongs to the mandelate racemase/muconate lactonizing enzyme family. MenC type 1 subfamily. A divalent metal cation is required as a cofactor.

It carries out the reaction (1R,6R)-6-hydroxy-2-succinyl-cyclohexa-2,4-diene-1-carboxylate = 2-succinylbenzoate + H2O. The protein operates within quinol/quinone metabolism; 1,4-dihydroxy-2-naphthoate biosynthesis; 1,4-dihydroxy-2-naphthoate from chorismate: step 4/7. It functions in the pathway quinol/quinone metabolism; menaquinone biosynthesis. Its function is as follows. Converts 2-succinyl-6-hydroxy-2,4-cyclohexadiene-1-carboxylate (SHCHC) to 2-succinylbenzoate (OSB). The protein is o-succinylbenzoate synthase of Escherichia coli O6:K15:H31 (strain 536 / UPEC).